A 484-amino-acid polypeptide reads, in one-letter code: Arginine ADP-riboxanase OspC3 (484 aa).

NAD(+) contacts are provided by H143, Q144, S145, N155, K157, T169, N172, and T173. The active site involves E326. ANK repeat units lie at residues 369–398 (MAHQ…FTKQ), 413–444 (NLYD…DVNK), and 451–480 (SGDT…ILGK).

Belongs to the OspC family. As to quaternary structure, interacts with host calmodulin (CALM1, CALM2 and/or CALM3); specifically interacts with the apo form of calmodulin, preventing calcium-binding.

The protein localises to the secreted. It localises to the host cytoplasm. The catalysed reaction is L-arginyl-[protein] + NAD(+) = ADP-riboxanated L-argininyl-[protein] + nicotinamide + NH4(+) + H(+). Interaction with host calmodulin (CALM1, CALM2 and/or CALM3) is required to mediate arginine ADP-riboxanation of host caspases. ADP-riboxanase effector that inhibits host cell pyroptosis. Acts by mediating arginine ADP-riboxanation of host CASP4/CASP11, blocking CASP4/CASP11 autoprocessing. This prevents CASP4 activation and ability to recognize and cleave GSDMD, thereby inhibiting LPS-induced pyroptosis. ADP-riboxanation takes place in two steps: OspC3 first catalyzes ADP-ribosylation of target Arg, and then initiates a deamination to remove one N-omega group. Independently of its ADP-riboxanase activity, acts as an inhibitor of calcium signaling by inhibiting host calmodulin, preventing activation of the JAK-STAT signaling pathway in response to interferon-beta. Mechanistically, acts by binding to the apo form of calmodulin, preventing calcium-binding and ability to activate host CaMK2 (CAMKII), which is required to stimulate the JAK-STAT signaling pathway in response to interferon-beta. The polypeptide is Arginine ADP-riboxanase OspC3 (Shigella flexneri).